A 338-amino-acid chain; its full sequence is Biotin synthase (338 aa).

One can recognise a Radical SAM core domain in the interval 63–290; it reads NGVQLSTLLS…RAKVRLSAGR (228 aa). [4Fe-4S] cluster is bound by residues Cys78, Cys82, and Cys85. Residues Cys122, Cys153, Cys213, and Arg285 each contribute to the [2Fe-2S] cluster site.

Belongs to the radical SAM superfamily. Biotin synthase family. In terms of assembly, homodimer. [4Fe-4S] cluster serves as cofactor. [2Fe-2S] cluster is required as a cofactor.

The enzyme catalyses (4R,5S)-dethiobiotin + (sulfur carrier)-SH + 2 reduced [2Fe-2S]-[ferredoxin] + 2 S-adenosyl-L-methionine = (sulfur carrier)-H + biotin + 2 5'-deoxyadenosine + 2 L-methionine + 2 oxidized [2Fe-2S]-[ferredoxin]. It functions in the pathway cofactor biosynthesis; biotin biosynthesis; biotin from 7,8-diaminononanoate: step 2/2. Functionally, catalyzes the conversion of dethiobiotin (DTB) to biotin by the insertion of a sulfur atom into dethiobiotin via a radical-based mechanism. The chain is Biotin synthase from Nitrosomonas eutropha (strain DSM 101675 / C91 / Nm57).